Consider the following 521-residue polypeptide: ATP synthase subunit beta (521 aa).

Composition is skewed to low complexity over residues 1–21 (MAKA…AAKA) and 28–42 (PKTT…TKSG). A disordered region spans residues 1-42 (MAKAATPKTTAAAEAKPAAKAPAKKAAPKTTAAAKPAATKSG). 199 to 206 (GGAGVGKT) contacts ATP.

This sequence belongs to the ATPase alpha/beta chains family. F-type ATPases have 2 components, CF(1) - the catalytic core - and CF(0) - the membrane proton channel. CF(1) has five subunits: alpha(3), beta(3), gamma(1), delta(1), epsilon(1). CF(0) has three main subunits: a(1), b(2) and c(9-12). The alpha and beta chains form an alternating ring which encloses part of the gamma chain. CF(1) is attached to CF(0) by a central stalk formed by the gamma and epsilon chains, while a peripheral stalk is formed by the delta and b chains.

It localises to the cell inner membrane. The catalysed reaction is ATP + H2O + 4 H(+)(in) = ADP + phosphate + 5 H(+)(out). Produces ATP from ADP in the presence of a proton gradient across the membrane. The catalytic sites are hosted primarily by the beta subunits. This Brucella abortus (strain 2308) protein is ATP synthase subunit beta.